Reading from the N-terminus, the 247-residue chain is Adenosylcobinamide-GDP ribazoletransferase (247 aa).

5 helical membrane passes run 34 to 54 (IITF…VFMV), 59 to 79 (CGVP…TGGF), 113 to 133 (GGLA…ELAL), 138 to 158 (ILAS…LLMY), and 194 to 214 (VLLP…AIFI).

It belongs to the CobS family. Requires Mg(2+) as cofactor.

Its subcellular location is the cell inner membrane. It carries out the reaction alpha-ribazole + adenosylcob(III)inamide-GDP = adenosylcob(III)alamin + GMP + H(+). The catalysed reaction is alpha-ribazole 5'-phosphate + adenosylcob(III)inamide-GDP = adenosylcob(III)alamin 5'-phosphate + GMP + H(+). It participates in cofactor biosynthesis; adenosylcobalamin biosynthesis; adenosylcobalamin from cob(II)yrinate a,c-diamide: step 7/7. Its function is as follows. Joins adenosylcobinamide-GDP and alpha-ribazole to generate adenosylcobalamin (Ado-cobalamin). Also synthesizes adenosylcobalamin 5'-phosphate from adenosylcobinamide-GDP and alpha-ribazole 5'-phosphate. The polypeptide is Adenosylcobinamide-GDP ribazoletransferase (Escherichia coli O7:K1 (strain IAI39 / ExPEC)).